A 695-amino-acid chain; its full sequence is RING finger protein 145 (695 aa).

13 helical membrane-spanning segments follow: residues 53–73 (YLALNMHYVGYILSVVLLTLP), 77–97 (LAKLYLYFVAALLLFAGHQIS), 123–143 (FITALVGQLVVCTLCSCVMKT), 146–166 (IWLFSAHMLPLLARLCLIPIE), 168–188 (IVVINKFAMIFTGLEVLYFLA), 225–245 (LVVPVLFMVFWLVLFALQIYT), 275–295 (YSLLGLVFTVSFVALGVLTLC), 316–336 (TEGVTLLILAVQTGLIELQVV), 340–360 (FLLSIILFIVVASILQSMLEI), 384–404 (SLCLFLLVFPSYMAYMICQFF), 410–430 (LLIIISSSILTSLQVLGTLFV), 460–480 (LLEFLVALCVVAYGVSETVFG), and 482–502 (WTVMGSMIIFIHSYYNVWLRA). The RING-type; atypical zinc finger occupies 537 to 575 (CSICYQDMNSAVITPCSHFFHPGCLKKWLYVQETCPLCH). Over residues 589–604 (SGSSTNPVVEQSANNP) the composition is skewed to polar residues. The tract at residues 589 to 608 (SGSSTNPVVEQSANNPPQEP) is disordered.

The protein localises to the membrane. The polypeptide is RING finger protein 145 (rnf145) (Xenopus laevis (African clawed frog)).